A 664-amino-acid polypeptide reads, in one-letter code: Alpha-1,4-glucan:maltose-1-phosphate maltosyltransferase (664 aa).

Residues K261, Q321, and D356 each coordinate alpha-maltose 1-phosphate. D393 (nucleophile) is an active-site residue. N394 contacts alpha-maltose 1-phosphate. E422 acts as the Proton donor in catalysis. Residue 533-534 (KY) coordinates alpha-maltose 1-phosphate.

This sequence belongs to the glycosyl hydrolase 13 family. GlgE subfamily. In terms of assembly, homodimer.

It carries out the reaction alpha-maltose 1-phosphate + [(1-&gt;4)-alpha-D-glucosyl](n) = [(1-&gt;4)-alpha-D-glucosyl](n+2) + phosphate. In terms of biological role, maltosyltransferase that uses maltose 1-phosphate (M1P) as the sugar donor to elongate linear or branched alpha-(1-&gt;4)-glucans. Is involved in a branched alpha-glucan biosynthetic pathway from trehalose, together with TreS, Mak and GlgB. The sequence is that of Alpha-1,4-glucan:maltose-1-phosphate maltosyltransferase from Pseudomonas aeruginosa (strain ATCC 15692 / DSM 22644 / CIP 104116 / JCM 14847 / LMG 12228 / 1C / PRS 101 / PAO1).